The primary structure comprises 310 residues: MRTHDDTWDIKTSVGTTAVMVAAARAAETDRPDALIRDPYAKLLVTNTGAGALWEAMLDPSMVAKVEAIDAEAAAMVEHMRSYQAVRTNFFDTYFNNAVIDGIRQFVILASGLDSRAYRLDWPTGTTVYEIDQPKVLAYKSTTLAEHGVTPTADRREVPIDLRQDWPPALRSAGFDPSARTAWLAEGLLMYLPATAQDGLFTEIGGLSAVGSRIAVETSPLHGDEWREQMQLRFRRVSDALGFEQAVDVQELIYHDENRAVVADWLNRHGWRATAQSAPDEMRRVGRWGDGVPMADDKDAFAEFVTAHRL.

S-adenosyl-L-methionine-binding positions include D132 and 161–162; that span reads DL.

This sequence belongs to the UPF0677 family.

Its function is as follows. Exhibits S-adenosyl-L-methionine-dependent methyltransferase activity. This is Putative S-adenosyl-L-methionine-dependent methyltransferase ML2640 from Mycobacterium leprae (strain TN).